A 170-amino-acid polypeptide reads, in one-letter code: Transcription factor E (170 aa).

In terms of domain architecture, HTH TFE/IIEalpha-type spans 1-93 (MKDVYLYIVE…TWYVNDEVIS (93 aa)).

The protein belongs to the TFE family. As to quaternary structure, monomer. Interaction with RNA polymerase subunits RpoF and RpoE is necessary for Tfe stimulatory transcription activity. Able to interact with Tbp and RNA polymerase in the absence of DNA promoter. Interacts both with the preinitiation and elongation complexes.

In terms of biological role, transcription factor that plays a role in the activation of archaeal genes transcribed by RNA polymerase. Facilitates transcription initiation by enhancing TATA-box recognition by TATA-box-binding protein (Tbp), and transcription factor B (Tfb) and RNA polymerase recruitment. Not absolutely required for transcription in vitro, but particularly important in cases where Tbp or Tfb function is not optimal. It dynamically alters the nucleic acid-binding properties of RNA polymerases by stabilizing the initiation complex and destabilizing elongation complexes. Seems to translocate with the RNA polymerase following initiation and acts by binding to the non template strand of the transcription bubble in elongation complexes. The sequence is that of Transcription factor E from Pyrobaculum calidifontis (strain DSM 21063 / JCM 11548 / VA1).